A 337-amino-acid chain; its full sequence is Tryptophan--tRNA ligase (337 aa).

ATP-binding positions include 11-13 (QPT) and 19-20 (GN). A 'HIGH' region motif is present at residues 12–20 (PTGALHLGN). Aspartate 135 lines the L-tryptophan pocket. Residues 147 to 149 (GED), valine 191, and 200 to 204 (KMSKS) contribute to the ATP site. Residues 200–204 (KMSKS) carry the 'KMSKS' region motif.

It belongs to the class-I aminoacyl-tRNA synthetase family. In terms of assembly, homodimer.

Its subcellular location is the cytoplasm. The catalysed reaction is tRNA(Trp) + L-tryptophan + ATP = L-tryptophyl-tRNA(Trp) + AMP + diphosphate + H(+). Catalyzes the attachment of tryptophan to tRNA(Trp). The sequence is that of Tryptophan--tRNA ligase from Prochlorococcus marinus (strain MIT 9313).